Consider the following 68-residue polypeptide: uncharacterized protein (68 aa).

The interval 1-20 (MYKQKKKNHPFQCKKKKKKK) is disordered. Residues 27 to 44 (IKLLFNYFLFFNFIITTF) form a helical membrane-spanning segment.

The protein localises to the membrane. This is an uncharacterized protein from Dictyostelium discoideum (Social amoeba).